A 425-amino-acid polypeptide reads, in one-letter code: E3 ubiquitin-protein ligase GW2 (425 aa).

Residues 62–105 (CPICFLYYPSLNRSKCCSKGICTECFLQMKPTHTAQPTQCPFCK) form an RING-type; degenerate zinc finger.

As to expression, expressed in roots, shoots, leaves, inflorescence meristems, stamens, pistils, spikelet hulls and endosperms 4 days after fertilization.

The protein resides in the cytoplasm. It catalyses the reaction S-ubiquitinyl-[E2 ubiquitin-conjugating enzyme]-L-cysteine + [acceptor protein]-L-lysine = [E2 ubiquitin-conjugating enzyme]-L-cysteine + N(6)-ubiquitinyl-[acceptor protein]-L-lysine.. Its pathway is protein modification; protein ubiquitination. Functionally, E3 ubiquitin-protein ligase involved in the regulation of grain size. May limit grain width and weight by restricting cell proliferation of the spikelet hull. Possesses E3 ubiquitin-protein ligase activity in vitro. The chain is E3 ubiquitin-protein ligase GW2 from Oryza sativa subsp. indica (Rice).